The sequence spans 426 residues: Enolase (426 aa).

Q163 contributes to the (2R)-2-phosphoglycerate binding site. The active-site Proton donor is E205. Residues D242, E286, and D313 each coordinate Mg(2+). The (2R)-2-phosphoglycerate site is built by K338, R367, S368, and K389. K338 functions as the Proton acceptor in the catalytic mechanism.

It belongs to the enolase family. It depends on Mg(2+) as a cofactor.

It is found in the cytoplasm. The protein localises to the secreted. Its subcellular location is the cell surface. It catalyses the reaction (2R)-2-phosphoglycerate = phosphoenolpyruvate + H2O. Its pathway is carbohydrate degradation; glycolysis; pyruvate from D-glyceraldehyde 3-phosphate: step 4/5. Catalyzes the reversible conversion of 2-phosphoglycerate (2-PG) into phosphoenolpyruvate (PEP). It is essential for the degradation of carbohydrates via glycolysis. This Helicobacter pylori (strain J99 / ATCC 700824) (Campylobacter pylori J99) protein is Enolase.